The following is a 302-amino-acid chain: Ribosomal RNA small subunit methyltransferase H (302 aa).

Residues 36–38 (GGH), Asp-56, Phe-84, Asp-99, and Gln-106 contribute to the S-adenosyl-L-methionine site.

Belongs to the methyltransferase superfamily. RsmH family.

It is found in the cytoplasm. It carries out the reaction cytidine(1402) in 16S rRNA + S-adenosyl-L-methionine = N(4)-methylcytidine(1402) in 16S rRNA + S-adenosyl-L-homocysteine + H(+). Specifically methylates the N4 position of cytidine in position 1402 (C1402) of 16S rRNA. This chain is Ribosomal RNA small subunit methyltransferase H, found in Flavobacterium johnsoniae (strain ATCC 17061 / DSM 2064 / JCM 8514 / BCRC 14874 / CCUG 350202 / NBRC 14942 / NCIMB 11054 / UW101) (Cytophaga johnsonae).